Consider the following 332-residue polypeptide: tRNA dimethylallyltransferase 2 (332 aa).

15 to 22 (GPTASGKT) contributes to the ATP binding site. A substrate-binding site is contributed by 17–22 (TASGKT). Interaction with substrate tRNA stretches follow at residues 40–43 (DSVM) and 164–168 (QRIQR).

Belongs to the IPP transferase family. In terms of assembly, monomer. Mg(2+) is required as a cofactor.

The catalysed reaction is adenosine(37) in tRNA + dimethylallyl diphosphate = N(6)-dimethylallyladenosine(37) in tRNA + diphosphate. Functionally, catalyzes the transfer of a dimethylallyl group onto the adenine at position 37 in tRNAs that read codons beginning with uridine, leading to the formation of N6-(dimethylallyl)adenosine (i(6)A). The protein is tRNA dimethylallyltransferase 2 of Hahella chejuensis (strain KCTC 2396).